The chain runs to 277 residues: Putative phosphoenolpyruvate synthase regulatory protein (277 aa).

152-159 (GVSRCGKT) is a binding site for ADP.

Belongs to the pyruvate, phosphate/water dikinase regulatory protein family. PSRP subfamily.

The enzyme catalyses [pyruvate, water dikinase] + ADP = [pyruvate, water dikinase]-phosphate + AMP + H(+). It catalyses the reaction [pyruvate, water dikinase]-phosphate + phosphate + H(+) = [pyruvate, water dikinase] + diphosphate. Its function is as follows. Bifunctional serine/threonine kinase and phosphorylase involved in the regulation of the phosphoenolpyruvate synthase (PEPS) by catalyzing its phosphorylation/dephosphorylation. The chain is Putative phosphoenolpyruvate synthase regulatory protein from Chromohalobacter salexigens (strain ATCC BAA-138 / DSM 3043 / CIP 106854 / NCIMB 13768 / 1H11).